Here is a 454-residue protein sequence, read N- to C-terminus: Phosphoglucosamine mutase (454 aa).

Ser-104 serves as the catalytic Phosphoserine intermediate. Residues Ser-104, Asp-241, Asp-243, and Asp-245 each contribute to the Mg(2+) site. Residue Ser-104 is modified to Phosphoserine.

The protein belongs to the phosphohexose mutase family. It depends on Mg(2+) as a cofactor. In terms of processing, activated by phosphorylation.

It carries out the reaction alpha-D-glucosamine 1-phosphate = D-glucosamine 6-phosphate. In terms of biological role, catalyzes the conversion of glucosamine-6-phosphate to glucosamine-1-phosphate. In Paenarthrobacter aurescens (strain TC1), this protein is Phosphoglucosamine mutase.